We begin with the raw amino-acid sequence, 268 residues long: Peptide transport system ATP-binding protein SapF (268 aa).

The ABC transporter domain occupies 6–251 (LEVRNLSKTF…PLHELTKRLI (246 aa)). 47–54 (GENGSGKS) provides a ligand contact to ATP.

This sequence belongs to the ABC transporter superfamily.

The protein resides in the cell inner membrane. Functionally, involved in a peptide intake transport system that plays a role in the resistance to antimicrobial peptides. The polypeptide is Peptide transport system ATP-binding protein SapF (sapF) (Escherichia coli O6:H1 (strain CFT073 / ATCC 700928 / UPEC)).